Reading from the N-terminus, the 278-residue chain is 4-deoxy-L-threo-5-hexosulose-uronate ketol-isomerase (278 aa).

Zn(2+)-binding residues include His196, His198, Glu203, and His245.

It belongs to the KduI family. In terms of assembly, homohexamer. It depends on Zn(2+) as a cofactor.

The catalysed reaction is 5-dehydro-4-deoxy-D-glucuronate = 3-deoxy-D-glycero-2,5-hexodiulosonate. It participates in glycan metabolism; pectin degradation; 2-dehydro-3-deoxy-D-gluconate from pectin: step 4/5. Functionally, catalyzes the isomerization of 5-dehydro-4-deoxy-D-glucuronate to 3-deoxy-D-glycero-2,5-hexodiulosonate. This Escherichia coli (strain SMS-3-5 / SECEC) protein is 4-deoxy-L-threo-5-hexosulose-uronate ketol-isomerase.